A 358-amino-acid chain; its full sequence is Glyoxylate/succinic semialdehyde reductase 2, chloroplastic (358 aa).

A chloroplast-targeting transit peptide spans 1–44; the sequence is MPLVSLSFASSSSKAMALCSICPRIPLRFRPKPISPFLSKPQIC. Residues 70-84 and T161 each bind NADP(+); that span reads GFLGMGIMGSPMAQN. Residue K236 is part of the active site. NADP(+) is bound at residue K304.

It belongs to the HIBADH-related family. NP60 subfamily.

The protein localises to the plastid. It localises to the chloroplast stroma. The enzyme catalyses glycolate + NADP(+) = glyoxylate + NADPH + H(+). It catalyses the reaction 4-hydroxybutanoate + NADP(+) = succinate semialdehyde + NADPH + H(+). With respect to regulation, the ratio of NADPH/NADP(+) may regulate enzymatic activity. In terms of biological role, catalyzes the NADPH-dependent reduction of glyoxylate to glycolate as well as succinic semialdehyde (SSA) to gamma-hydroxybutyrate in vitro. May function in redox homeostasis and play a role in oxidative stress tolerance by detoxifying glyoxylate and SSA generated in glycolate metabolism and GABA metabolism, respectively. The sequence is that of Glyoxylate/succinic semialdehyde reductase 2, chloroplastic (GLYR2) from Arabidopsis thaliana (Mouse-ear cress).